We begin with the raw amino-acid sequence, 378 residues long: Protein RecA (378 aa).

79–86 contacts ATP; sequence GPESSGKT.

Belongs to the RecA family.

Its subcellular location is the cytoplasm. Its function is as follows. Can catalyze the hydrolysis of ATP in the presence of single-stranded DNA, the ATP-dependent uptake of single-stranded DNA by duplex DNA, and the ATP-dependent hybridization of homologous single-stranded DNAs. It interacts with LexA causing its activation and leading to its autocatalytic cleavage. The protein is Protein RecA of Streptococcus pyogenes serotype M2 (strain MGAS10270).